Consider the following 476-residue polypeptide: Bifunctional protein GlmU (476 aa).

The pyrophosphorylase stretch occupies residues 1 to 232 (MGDLAAIILA…PVEVMGVNDR (232 aa)). UDP-N-acetyl-alpha-D-glucosamine is bound by residues 9 to 12 (LAAG), K23, Q75, and 80 to 81 (GT). Position 105 (D105) interacts with Mg(2+). UDP-N-acetyl-alpha-D-glucosamine contacts are provided by G142, E157, N172, and N230. N230 contributes to the Mg(2+) binding site. The tract at residues 233 to 253 (AQLAEAGRFARQRINRELMLD) is linker. The segment at 254–476 (GVTIVDPAAT…DGWKLKQRDQ (223 aa)) is N-acetyltransferase. Residues R353 and K371 each contribute to the UDP-N-acetyl-alpha-D-glucosamine site. Residue H383 is the Proton acceptor of the active site. UDP-N-acetyl-alpha-D-glucosamine-binding residues include Y386 and N397. Acetyl-CoA contacts are provided by residues 406 to 407 (NY), S425, A443, and R460.

The protein in the N-terminal section; belongs to the N-acetylglucosamine-1-phosphate uridyltransferase family. This sequence in the C-terminal section; belongs to the transferase hexapeptide repeat family. Homotrimer. Mg(2+) serves as cofactor.

It localises to the cytoplasm. It carries out the reaction alpha-D-glucosamine 1-phosphate + acetyl-CoA = N-acetyl-alpha-D-glucosamine 1-phosphate + CoA + H(+). The catalysed reaction is N-acetyl-alpha-D-glucosamine 1-phosphate + UTP + H(+) = UDP-N-acetyl-alpha-D-glucosamine + diphosphate. It participates in nucleotide-sugar biosynthesis; UDP-N-acetyl-alpha-D-glucosamine biosynthesis; N-acetyl-alpha-D-glucosamine 1-phosphate from alpha-D-glucosamine 6-phosphate (route II): step 2/2. The protein operates within nucleotide-sugar biosynthesis; UDP-N-acetyl-alpha-D-glucosamine biosynthesis; UDP-N-acetyl-alpha-D-glucosamine from N-acetyl-alpha-D-glucosamine 1-phosphate: step 1/1. Its pathway is bacterial outer membrane biogenesis; LPS lipid A biosynthesis. Functionally, catalyzes the last two sequential reactions in the de novo biosynthetic pathway for UDP-N-acetylglucosamine (UDP-GlcNAc). The C-terminal domain catalyzes the transfer of acetyl group from acetyl coenzyme A to glucosamine-1-phosphate (GlcN-1-P) to produce N-acetylglucosamine-1-phosphate (GlcNAc-1-P), which is converted into UDP-GlcNAc by the transfer of uridine 5-monophosphate (from uridine 5-triphosphate), a reaction catalyzed by the N-terminal domain. This chain is Bifunctional protein GlmU, found in Geobacter metallireducens (strain ATCC 53774 / DSM 7210 / GS-15).